The sequence spans 576 residues: Probable proline--tRNA ligase, mitochondrial (576 aa).

It belongs to the class-II aminoacyl-tRNA synthetase family.

The protein localises to the mitochondrion. The enzyme catalyses tRNA(Pro) + L-proline + ATP = L-prolyl-tRNA(Pro) + AMP + diphosphate. In Saccharomyces cerevisiae (strain ATCC 204508 / S288c) (Baker's yeast), this protein is Probable proline--tRNA ligase, mitochondrial (AIM10).